Consider the following 217-residue polypeptide: Growth factor receptor-bound protein 2 (217 aa).

At methionine 1 the chain carries N-acetylmethionine. An SH3 1 domain is found at 1–58 (MEAIAKYDFKATADDELSFKRGDILKVLNEECDQNWYKAELNGKDGFIPKNYIEMKPH). An N6-acetyllysine mark is found at lysine 6, lysine 50, and lysine 109. The SH2 domain occupies 60 to 152 (WFFGKIPRAK…NQQIFLRDIE (93 aa)). Lysine 109 is covalently cross-linked (Glycyl lysine isopeptide (Lys-Gly) (interchain with G-Cter in ubiquitin)). The SH3 2 domain maps to 156-215 (QQPTYVQALFDFDPQEDGELGFRRGDFIHVMDNSDPNWWKGACHGQTGMFPRNYVTPVNR). A Phosphotyrosine modification is found at tyrosine 209. Residue threonine 211 is modified to Phosphothreonine.

Belongs to the GRB2/sem-5/DRK family. In terms of assembly, homodimer. Associates (via SH2 domain) with activated EGF and PDGF receptors (tyrosine phosphorylated). Interacts with PDGFRA (tyrosine phosphorylated); the interaction may be indirect. Also associates to other cellular Tyr-phosphorylated proteins such as SIT1, IRS1, IRS2, IRS4, SHC and LNK; probably via the concerted action of both its SH2 and SH3 domains. It also seems to interact with RAS in the signaling pathway leading to DNA synthesis. Interacts with SOS1. Forms a complex with MUC1 and SOS1, through interaction of the SH3 domains with SOS1 and the SH2 domain with phosphorylated MUC1. Interacts with phosphorylated MET. Interacts with phosphorylated TOM1L1. Interacts with the phosphorylated C-terminus of SH2B2. Interacts with phosphorylated SIT1, LAX1, LAT, LAT2 and LIME1 upon TCR and/or BCR activation. Interacts with NISCH, PTPNS1 and REPS2. Interacts with syntrophin SNTA1. Interacts (via SH3 domains) with REPS1. Interacts (via SH3 domains) with PIK3C2B. Interacts with CBL and CBLB. Interacts with AJUBA and CLNK. Interacts (via SH2 domain) with TEK/TIE2 (tyrosine phosphorylated). Interacts with SHB, INPP5D/SHIP1, SKAP1 and SKAP2. Interacts with PTPN11. Interacts with PRNP. Interacts with RALGPS1. Interacts with HCST. Interacts with KDR. Interacts with FLT1 (tyrosine-phosphorylated). Interacts with GAPT and PTPRE. Interacts (via SH2 domain) with KIF26A. Interacts (via SH3 2) with GAB2. Interacts with ADAM15. Interacts with THEMIS2. Interacts (via SH2 domain) with AXL (phosphorylated). Interacts (via SH2 domain) with KIT (phosphorylated). Interacts with PTPRJ and BCR. Interacts with PTPN23. Interacts with FLT4 (tyrosine phosphorylated). Interacts with EPHB1 and SHC1; activates the MAPK/ERK cascade to regulate cell migration. Part of a complex including TNK2, GRB2, LTK and one receptor tyrosine kinase (RTK) such as AXL and PDGFRL, in which GRB2 promotes RTK recruitment by TNK2. Interacts (via SH2 domain) with CSF1R (tyrosine phosphorylated). Interacts with ERBB4. Interacts with NTRK1 (phosphorylated upon ligand-binding). Interacts with PTK2/FAK1 (tyrosine phosphorylated). Interacts with PTK2B/PYK2 (tyrosine phosphorylated). Interacts (via SH3 domains) with GAREM1 isoform 1 (via proline-rich domain and tyrosine phosphorylated); the interaction occurs upon EGF stimulation. Interacts with DAB2. Interacts with TESPA1. Interacts with PLCG1, LAT and THEMIS upon TCR activation in thymocytes; the association is weaker in the absence of TESPA1. Interacts with CD28. Interacts with RAB13; may recruit RAB13 to the leading edge of migrating endothelial cells where it can activate RHOA. Interacts with ASAP3 (phosphorylated form). Interacts (via SH2 domain) with PTPRH (phosphorylated form). Interacts with PTPRO (phosphorylated form). Interacts with PTPRB (phosphorylated form). Interacts (via SH3 domain 2) with PRR14 (via proline-rich region). Interacts with FCRL6 (tyrosine phosphorylated form). Interacts with RHEX (via tyrosine-phosphorylated form). Interacts with DENND2B. Interacts with SPRY2. Interacts with LRRC8A. Interacts with PEAK1. Interacts with CD28. Interacts with FCRL1. Interacts with PCNA. Interacts with CD19. Interacts with BECN1. Interacts with RAD51; the interaction inhibits RAD51 ATPase to stabilize RAD51-DNA complex at stalled replication forks. Interacts with MRE11; this interaction recruits MRE11 to the DNA damage sites. Interacts with RIPK1 ans SQSTM1; these interactions play a critical role in regulating programmed necrosis. Interacts with AGO2; this interaction is important for the formation of a ternary complex containing GRB2, AGO2 and DICER1. Interacts with TIGIT; this interaction inhibits PI3K and MAPK signaling cascades. Interacts with CD226; this interaction leads to activation of VAV1, PI3K and PLCG1. Interacts (via SH2-domain) with SCIMP; this interaction is dependent on phosphorylation of SCIMP 'Tyr-69'. As to quaternary structure, interacts with SOS1; this interaction competes with GRB2 to bind SOS1 via its N-terminal SH3 domain. In terms of assembly, (Microbial infection) Interacts (via SH3 domain) with hepatitis E virus/HEV ORF3 protein. (Microbial infection) Interacts with hepatitis C virus/HCV protein NS5A via its SH3 domains. As to quaternary structure, (Microbial infection) Interacts with herpes simplex virus 1 protein UL46. In terms of assembly, (Microbial infection) Interacts with B19 parvovirus protein 11K. Post-translationally, phosphorylation of Tyr-209 in the C-terminal SH3 domain reduces its binding to SOS1. Ubiquitinated by RNF173, leading to proteasomal degradation and inhibition of the RAF/MEK/ERK pathway. In the nucleus, polyubiquitinated by RBBP6 at Lys-109 at DNA damage sites.

The protein localises to the nucleus. The protein resides in the cytoplasm. Its subcellular location is the endosome. It is found in the golgi apparatus. Non-enzymatic adapter protein that plays a pivotal role in precisely regulated signaling cascades from cell surface receptors to cellular responses, including signaling transduction and gene expression. Thus, participates in many biological processes including regulation of innate and adaptive immunity, autophagy, DNA repair or necroptosis. Controls signaling complexes at the T-cell antigen receptor to facilitate the activation, differentiation, and function of T-cells. Mechanistically, engagement of the TCR leads to phosphorylation of the adapter protein LAT, which serves as docking site for GRB2. In turn, GRB2 establishes a a connection with SOS1 that acts as a guanine nucleotide exchange factor and serves as a critical regulator of KRAS/RAF1 leading to MAPKs translocation to the nucleus and activation. Functions also a role in B-cell activation by amplifying Ca(2+) mobilization and activation of the ERK MAP kinase pathway upon recruitment to the phosphorylated B-cell antigen receptor (BCR). Plays a role in switching between autophagy and programmed necrosis upstream of EGFR by interacting with components of necrosomes including RIPK1 and with autophagy regulators SQSTM1 and BECN1. Regulates miRNA biogenesis by forming a functional ternary complex with AGO2 and DICER1. Functions in the replication stress response by protecting DNA at stalled replication forks from MRE11-mediated degradation. Mechanistically, inhibits RAD51 ATPase activity to stabilize RAD51 on stalled replication forks. Additionally, directly recruits and later releases MRE11 at DNA damage sites during the homology-directed repair (HDR) process. Its function is as follows. Does not bind to phosphorylated epidermal growth factor receptor (EGFR) but inhibits EGF-induced transactivation of a RAS-responsive element. Acts as a dominant negative protein over GRB2 and by suppressing proliferative signals, may trigger active programmed cell death. Mechanistically, inhibits RAS-ERK signaling and downstream cell proliferation by competing with GRB2 for SOS1 binding and thus by regulating SOS1 membrane recruitment. The polypeptide is Growth factor receptor-bound protein 2 (GRB2) (Homo sapiens (Human)).